The primary structure comprises 216 residues: MNYPHPIIAREGWPFIAIAAVVALLIHAVGGFGLAWPFWLLLVFVVQFFRDPPRAIPTQANAVLCPADGRIVAVETAHDPYADREALKISVFMNVFNVHSQRSPVDGAVQKVEYFPGAFLNAALDKASAENERNAVVIQTGAGHTVTAVQIAGLVARRILCYVRAGEPLSRGQRYGFIRFGSRVDVYLPKGSRARVSIGEKVSASSTILAELPEQP.

The active-site Schiff-base intermediate with substrate; via pyruvic acid is S182. A Pyruvic acid (Ser); by autocatalysis modification is found at S182.

It belongs to the phosphatidylserine decarboxylase family. PSD-A subfamily. In terms of assembly, heterodimer of a large membrane-associated beta subunit and a small pyruvoyl-containing alpha subunit. Pyruvate serves as cofactor. Is synthesized initially as an inactive proenzyme. Formation of the active enzyme involves a self-maturation process in which the active site pyruvoyl group is generated from an internal serine residue via an autocatalytic post-translational modification. Two non-identical subunits are generated from the proenzyme in this reaction, and the pyruvate is formed at the N-terminus of the alpha chain, which is derived from the carboxyl end of the proenzyme. The post-translation cleavage follows an unusual pathway, termed non-hydrolytic serinolysis, in which the side chain hydroxyl group of the serine supplies its oxygen atom to form the C-terminus of the beta chain, while the remainder of the serine residue undergoes an oxidative deamination to produce ammonia and the pyruvoyl prosthetic group on the alpha chain.

It is found in the cell membrane. It catalyses the reaction a 1,2-diacyl-sn-glycero-3-phospho-L-serine + H(+) = a 1,2-diacyl-sn-glycero-3-phosphoethanolamine + CO2. Its pathway is phospholipid metabolism; phosphatidylethanolamine biosynthesis; phosphatidylethanolamine from CDP-diacylglycerol: step 2/2. Functionally, catalyzes the formation of phosphatidylethanolamine (PtdEtn) from phosphatidylserine (PtdSer). In Burkholderia pseudomallei (strain 1106a), this protein is Phosphatidylserine decarboxylase proenzyme.